Consider the following 202-residue polypeptide: Probable molybdenum cofactor guanylyltransferase (202 aa).

GTP-binding positions include 9-11 (VAG), Lys-22, Asn-50, Asp-77, and Asp-102. Asp-102 serves as a coordination point for Mg(2+).

The protein belongs to the MobA family. Requires Mg(2+) as cofactor.

It localises to the cytoplasm. It carries out the reaction Mo-molybdopterin + GTP + H(+) = Mo-molybdopterin guanine dinucleotide + diphosphate. Functionally, transfers a GMP moiety from GTP to Mo-molybdopterin (Mo-MPT) cofactor (Moco or molybdenum cofactor) to form Mo-molybdopterin guanine dinucleotide (Mo-MGD) cofactor. This chain is Probable molybdenum cofactor guanylyltransferase, found in Natronomonas pharaonis (strain ATCC 35678 / DSM 2160 / CIP 103997 / JCM 8858 / NBRC 14720 / NCIMB 2260 / Gabara) (Halobacterium pharaonis).